A 404-amino-acid chain; its full sequence is MFITLIFLSYINIVLSNNYWARLNETITLNSNITNDTNNELGIFWNSYNNTYYNNTFNNIAICGKKGIFCECNINYNTSISNTSISNTSIYNVTNNCSLTIFLYDDNIFKTYQLVYQNYKINYTINLLLPVTSPNITYNCTNSLITCEKNDGTNTNMFLSINNITINHTNQDILTYYWNNSEFNNFTATCMINNTLNSANTTKVINCTNPLLNSYQNYFLENIHTLFYIIIFIVSGLIASIFISIITFLSLRKRKKHVEEIESPPPESNEEEQCQHDDTTSIHEPSPREPLLPKPYSRYQYNTPIYYMRPSTQPLNPFPLPNPCPPPKPCPPPKPCPPPKPCPPPKPCPPPKPCPPPKPCPPPKPCSSPESYSPPKPLPSIPLLPNIPPLSTQNISLIHVDRII.

The first 16 residues, 1-16, serve as a signal peptide directing secretion; the sequence is MFITLIFLSYINIVLS. At 17 to 225 the chain is on the extracellular side; it reads NNYWARLNET…QNYFLENIHT (209 aa). Residues Asn24, Asn87, Asn92, Asn96, Asn122, Asn139, Asn167, Asn193, Asn200, and Asn206 are each glycosylated (N-linked (GlcNAc...) asparagine; by host). Disulfide bonds link Cys140–Cys207 and Cys147–Cys190. Residues 226–246 traverse the membrane as a helical segment; it reads LFYIIIFIVSGLIASIFISII. Topologically, residues 247–404 are cytoplasmic; that stretch reads TFLSLRKRKK…ISLIHVDRII (158 aa). The segment at 260–295 is disordered; sequence EIESPPPESNEEEQCQHDDTTSIHEPSPREPLLPKP. The span at 273-287 shows a compositional bias: basic and acidic residues; that stretch reads QCQHDDTTSIHEPSP. A run of 7 repeats spans residues 322–327, 328–333, 334–339, 340–345, 346–351, 352–357, and 358–363. The segment at 322–363 is 7 X 6 AA tandem repeats of [KN]-P-C-P-P-P; it reads NPCPPPKPCPPPKPCPPPKPCPPPKPCPPPKPCPPPKPCPPP. Pro residues predominate over residues 357-388; it reads PKPCPPPKPCSSPESYSPPKPLPSIPLLPNIP. The tract at residues 357-390 is disordered; that stretch reads PKPCPPPKPCSSPESYSPPKPLPSIPLLPNIPPL.

It belongs to the asfivirus CD2 homolog protein family. As to quaternary structure, both glycosylated and nonglycosylated forms interact (via C-terminus) with the host AP-1 complex. Post-translationally, cleaved into two fragments of 63 kDa and 26 kDa containing respectively the glycosylated N-terminus and the nonglycosylated C-terminus. A full-length 89-kDa glycosylated form also exists.

Its subcellular location is the host membrane. The protein localises to the virion membrane. It is found in the host Golgi apparatus. In terms of biological role, may play an immunosuppressive role by inhibiting lymphocyte proliferation and subsequently facilitating viral replication and generalization of infection. Responsible for viral hemadsorption, which may help viral spread. Increases virus replication in the tick vector at the step of virus uptake or replication in the tick gut. May play a role in the host Golgi reorganization to yield viral factories. May play a role in host cell penetration. The polypeptide is CD2 homolog (African swine fever virus (isolate Tick/South Africa/Pretoriuskop Pr4/1996) (ASFV)).